The primary structure comprises 206 residues: GTP cyclohydrolase 1 (206 aa).

Positions 97, 100, and 168 each coordinate Zn(2+).

Belongs to the GTP cyclohydrolase I family. In terms of assembly, toroid-shaped homodecamer, composed of two pentamers of five dimers.

The catalysed reaction is GTP + H2O = 7,8-dihydroneopterin 3'-triphosphate + formate + H(+). It participates in cofactor biosynthesis; 7,8-dihydroneopterin triphosphate biosynthesis; 7,8-dihydroneopterin triphosphate from GTP: step 1/1. This chain is GTP cyclohydrolase 1, found in Chromobacterium violaceum (strain ATCC 12472 / DSM 30191 / JCM 1249 / CCUG 213 / NBRC 12614 / NCIMB 9131 / NCTC 9757 / MK).